The chain runs to 548 residues: ATP synthase subunit alpha (548 aa).

172–179 contacts ATP; the sequence is GDRKTGKT.

This sequence belongs to the ATPase alpha/beta chains family. As to quaternary structure, F-type ATPases have 2 components, CF(1) - the catalytic core - and CF(0) - the membrane proton channel. CF(1) has five subunits: alpha(3), beta(3), gamma(1), delta(1), epsilon(1). CF(0) has three main subunits: a(1), b(2) and c(9-12). The alpha and beta chains form an alternating ring which encloses part of the gamma chain. CF(1) is attached to CF(0) by a central stalk formed by the gamma and epsilon chains, while a peripheral stalk is formed by the delta and b chains.

Its subcellular location is the cell membrane. The catalysed reaction is ATP + H2O + 4 H(+)(in) = ADP + phosphate + 5 H(+)(out). Functionally, produces ATP from ADP in the presence of a proton gradient across the membrane. The alpha chain is a regulatory subunit. In Mycobacteroides abscessus (strain ATCC 19977 / DSM 44196 / CCUG 20993 / CIP 104536 / JCM 13569 / NCTC 13031 / TMC 1543 / L948) (Mycobacterium abscessus), this protein is ATP synthase subunit alpha.